The chain runs to 2006 residues: METNSSLFGLVSPSSHDLVIERLASVGVPKKYRSKRGLVEFVRANPAKISELVSALLPTDDDVKLGLKEARERPRKSAVSPTMKKRFRESMNMLQWLMFQDEPDVSLRNLAKLNLDQRGVCGSVWGQNDIAYRCRTCENDPTCAICVPCFQNGDHNSHDYSIIYTGGGCCDCGDETAWKPDGFCSNHKGSEQIRPLSENLANSVGPILDALFTCWNNKLLSAESSGQKGARSNDTLVILQKMSNELTFIVVEMLLEFSMSSESLLSFVSRRIISSSGLLSILLKAERFLDQDVMKKLHDLFLKLIGDPVFKCEFAKAFVSYYPVVISEVVKQGTDNAFKKYPLLSTFSVQILTVPTLTPFLVKEMNLLAMLLGCLSDIFVSCSGEDGLLQATKLERLCETSERVIGDLKFVMSHAIVSKYATHEHRELSRSWLTLLTFAQGMNPLKRETGIPIDEENDYMHLFFVLGHSIAVIHSLLVNGTYSAASDEEIENDRNAKEEFDKCDGDGERYAKVGRLSHEDSVCTAIVSSSSFDSSMASEVHKIDPFHALLPSSAIYLIRECLKVLETCLGNDEGISKFLCKLSSSSGRNIPESKMSWPRRDLLNVETGGSVSSNLASSSRDPSTGLSPLCGDIQTNLSLDNVCGPYGVVQTDVTADSKRVSCNSADLTKNASGLRILGLCDWPDIHYDVSSQAISVHLPLHRLLSLLIQKALRICYGESASYNGVSISHEIPHADFFSSVIGDFHPCGFSALVMEHVLQIRVFCAQVIAGMWKKNGDSALVSCEWYRSVRWSEQGLELDLFLLQCCAALAPADSYVDKLLSRFGLSSYLSLNPDITNEYEPVLVQEMLGLLIQILQERRFCGLSTAESLRREIIFKLATGDFTHSQLVKSLPRDLSKSDELQEVLDDVSVYCNPSGMNQGKYSLQSSCWKELDLYHPRWQSRDLQSAEERFSRYCGVSALTTQLPRWRMIYPPLKGLARIGTCKATFQIISSALYYALQSGTSVKSRAPDGVLITALQLLSLSLDICTQQRQSNSQDCCLENSIPILELAGLEIIGIAQGTEKESLLSLLVSLMKTRMGDGRHQFPEPGSCNISSWIGNLLKKFSAIDSVCMNLLQSLAPEVVGQSGFDKVMSGSTSDEKRKAKAKERQAAIMAKMKAEQSKFLSTLSSSMDDDDPRSEFETSDSVMEHDSEIAVREVCSLCHDPDSKDPVSFLIFLQKSKLLSFVDRGPPSWDQCPQSEKKISVDGAPDLLRMNASSDSLRISSPLMLQLSDDTISESANMIESIKARLIGNGQTEKRSSDGRGKDESNMESLEIAMYQTVRNKIENMINQSLTRVDHQPHEAENCSEKNSVGGPSTLQGRFPDIRSRQTSRRPDAGSDGFHPIDCDGVYLSSCGHAVHQSCLERYLKSLKERSGRRTVFEGAHIVDLKKKEFLCPVCRRLANSVLPECPGDLCSVSKLQDSPRTKLRRKDALQPSLWLSEALCLLRSAAEVIEDGDRGKTVTPQGDGPRRKDLKSVSKMLWDFYFPKPEDKTLKRLWLPPQSIVMWDTLKYSLISMEIGTRFAKNSMLPVYCIDSLYEELKTSKGTILSVLLRVVQSSRTKNTIHVRQRFVGMKHLAESICYGVSSSSSSSIFGSEGTTGSLKNIDLLWNRASDPVLAHDPFSSLMWALFCLPFPFLTCEESLLSLVHIFHSVSLVQTVIAYCACRPSELSELNFGENLLNDISNALRESGGWEYFRSNNMDLSCDIKDTIRKYSLPFLRRCALLWKLLKSTPRKLHEESDMFDLPSDPTTDNMDFIYSPQSELNHVQELEKMFNIPPIDIILNDELLRSSTQIWLQHFQREYRVNRVKRSLCITPVVPFQLMKLPNLYQDLLQRCIKKRCVNCTKVIEEPVLCLLCGSLCSPIWSPCCRESGCPNHAITCGAGTGVFLLIRRTTILLQRFARQSPWPSPYLDTFGEEDIDMIRGKRLYLNEERYAALTYLVGSHGLDRSSKVLGQTTIGAVLH.

Residues 119 to 189 (GVCGSVWGQN…PDGFCSNHKG (71 aa)) form a UBR-type zinc finger. Disordered regions lie at residues 1167–1186 (LSSS…SDSV) and 1338–1380 (DHQP…AGSD). The segment covering 1338–1348 (DHQPHEAENCS) has biased composition (basic and acidic residues). Positions 1349–1360 (EKNSVGGPSTLQ) are enriched in polar residues. A compositionally biased stretch (basic and acidic residues) spans 1364-1377 (PDIRSRQTSRRPDA). The segment at 1395-1440 (CGHAVHQSCLERYLKSLKERSGRRTVFEGAHIVDLKKKEFLCPVCR) adopts an RING-type; degenerate zinc-finger fold.

This sequence belongs to the E3 ubiquitin-protein ligase UBR1-like family.

It catalyses the reaction S-ubiquitinyl-[E2 ubiquitin-conjugating enzyme]-L-cysteine + [acceptor protein]-L-lysine = [E2 ubiquitin-conjugating enzyme]-L-cysteine + N(6)-ubiquitinyl-[acceptor protein]-L-lysine.. The protein operates within protein modification; protein ubiquitination. Functionally, ubiquitin protein ligase which is a component of the N-end rule pathway with arginine specificity, and functions with the arginyltransferases ATE1 and ATE2. Recognizes and binds to proteins bearing specific N-terminal residues that are destabilizing according to the N-end rule, leading to their ubiquitination and subsequent degradation. Does not participate in degradation of proteins with N-terminal Phe or Leu. The N-end rule pathway regulates seed after-ripening, seedling sugar sensitivity, seedling lipid breakdown, and abscisic acid (ABA) sensitivity of germination. The N-end rule pathway regulates various aspects of leaf and shoot development. Involved in the ubiquitination and subsequent degradation of RAP2-12, an activator of hypoxic gene expression. The ubiquitination occurs after the N-arginylation of RAP2-12 by ATE1 or ATE2 under aerobic conditions. The end-rule pathway plays a role in regulating the timing and amplitude of the immune response following infection with the bacterial pathogen Pseudomonas syringae pv tomato. Regulates the biosynthesis of plant-defense metabolites such as glucosinolates, and the biosynthesis and response to the phytohormone jasmonate (JA), which plays a key role in plant immunity. Controls the expression of specific defense-response genes, activates the synthesis pathway for the phytoalexin camalexin, and influences basal resistance to the hemibiotroph pathogen Pseudomonas syringae pv tomato. Coordinates the mobilization of seed storage reserves and regulates the abundance and activities of several proteases following seed germination. This chain is E3 ubiquitin-protein ligase PRT6, found in Arabidopsis thaliana (Mouse-ear cress).